Here is a 522-residue protein sequence, read N- to C-terminus: Mediator of RNA polymerase II transcription subunit 1.2 (522 aa).

Residues 13-40 adopt a coiled-coil conformation; the sequence is LLEQRKNQELNIEHIDEEMRLEQVRQAA.

This sequence belongs to the Mediator complex subunit 1 family. As to quaternary structure, component of the Mediator complex.

It localises to the nucleus. Functionally, component of the Mediator complex, a coactivator involved in the regulated transcription of nearly all RNA polymerase II-dependent genes. Mediator functions as a bridge to convey information from gene-specific regulatory proteins to the basal RNA polymerase II transcription machinery. Mediator is recruited to promoters by direct interactions with regulatory proteins and serves as a scaffold for the assembly of a functional preinitiation complex with RNA polymerase II and the general transcription factors. The sequence is that of Mediator of RNA polymerase II transcription subunit 1.2 (mdt-1.2) from Caenorhabditis elegans.